The sequence spans 327 residues: Zinc transport protein ZntB (327 aa).

Residues 1-273 (MEAIKGSDVN…ARRTYTMSLM (273 aa)) are Cytoplasmic-facing. The chain crosses the membrane as a helical span at residues 274–294 (AMVFLPSTFLTGLFGVNLGGI). The Periplasmic portion of the chain corresponds to 295–300 (PGGGWR). Residues 301–321 (FGFSLFCILLVVLIGGVTLWL) traverse the membrane as a helical segment. Residues 322–327 (HRSKWL) are Cytoplasmic-facing.

This sequence belongs to the CorA metal ion transporter (MIT) (TC 1.A.35) family.

It is found in the cell inner membrane. It carries out the reaction Zn(2+)(out) + H(+)(out) = Zn(2+)(in) + H(+)(in). Zinc transporter. Acts as a Zn(2+):proton symporter, which likely mediates zinc ion uptake. The protein is Zinc transport protein ZntB of Salmonella choleraesuis (strain SC-B67).